Consider the following 336-residue polypeptide: Iron(3+)-hydroxamate import system permease protein FhuG (336 aa).

Helical transmembrane passes span 9 to 29 (LIVM…SLNL), 63 to 83 (IILS…LQSV), 91 to 111 (PGIL…IYFF), 124 to 144 (FMLP…IYIL), 155 to 175 (LILV…IFQL), 193 to 213 (IWGA…ILLL), 245 to 265 (ILLL…GGIA), 285 to 305 (TLIP…DTLA), and 313 to 333 (EIPV…YLLM).

It belongs to the binding-protein-dependent transport system permease family. FecCD subfamily. The complex is composed of an ATP-binding protein (FhuC), two transmembrane proteins (FhuB and FhuG) and a solute-binding protein (FhuD or YxeB).

The protein localises to the cell membrane. Part of the ABC transporter complex FhuBGCD involved in iron(3+)-hydroxamate import. Responsible for the translocation of the substrate across the membrane. The polypeptide is Iron(3+)-hydroxamate import system permease protein FhuG (fhuG) (Bacillus subtilis (strain 168)).